The sequence spans 253 residues: Octanoyltransferase (253 aa).

One can recognise a BPL/LPL catalytic domain in the interval 47 to 236 (PETPDQVWLV…ALCEVLAARE (190 aa)). Residues 87–94 (RGGQITYH), 159–161 (ALG), and 172–174 (GVS) contribute to the substrate site. Catalysis depends on C190, which acts as the Acyl-thioester intermediate.

This sequence belongs to the LipB family.

The protein resides in the cytoplasm. The enzyme catalyses octanoyl-[ACP] + L-lysyl-[protein] = N(6)-octanoyl-L-lysyl-[protein] + holo-[ACP] + H(+). It participates in protein modification; protein lipoylation via endogenous pathway; protein N(6)-(lipoyl)lysine from octanoyl-[acyl-carrier-protein]: step 1/2. Catalyzes the transfer of endogenously produced octanoic acid from octanoyl-acyl-carrier-protein onto the lipoyl domains of lipoate-dependent enzymes. Lipoyl-ACP can also act as a substrate although octanoyl-ACP is likely to be the physiological substrate. The protein is Octanoyltransferase of Cupriavidus pinatubonensis (strain JMP 134 / LMG 1197) (Cupriavidus necator (strain JMP 134)).